Here is a 747-residue protein sequence, read N- to C-terminus: Probable type III restriction-modification enzyme HindVI Mod subunit (747 aa).

The segment at 267–270 is binding of S-adenosyl methionine; sequence DPPY.

The protein belongs to the N(4)/N(6)-methyltransferase family. In terms of assembly, homodimer, also forms a functional restriction-competent complex with Res.

It carries out the reaction a 2'-deoxyadenosine in DNA + S-adenosyl-L-methionine = an N(6)-methyl-2'-deoxyadenosine in DNA + S-adenosyl-L-homocysteine + H(+). Functionally, a beta subtype methylase that binds the system-specific DNA recognition site 5'-CGAAT-3' and methylates A-4 (of only 1 strand). DNA restriction requires both the Res and Mod subunits. The polypeptide is Probable type III restriction-modification enzyme HindVI Mod subunit (Haemophilus influenzae (strain ATCC 51907 / DSM 11121 / KW20 / Rd)).